A 644-amino-acid polypeptide reads, in one-letter code: Fructose-1,6-bisphosphatase class 3 (644 aa).

The protein belongs to the FBPase class 3 family. The cofactor is Mn(2+).

The catalysed reaction is beta-D-fructose 1,6-bisphosphate + H2O = beta-D-fructose 6-phosphate + phosphate. Its pathway is carbohydrate biosynthesis; gluconeogenesis. This chain is Fructose-1,6-bisphosphatase class 3, found in Oceanobacillus iheyensis (strain DSM 14371 / CIP 107618 / JCM 11309 / KCTC 3954 / HTE831).